Consider the following 226-residue polypeptide: Chalcone--flavanone isomerase 3 (226 aa).

Residues Thr-49, Asn-114, and Ser-191 each contribute to the substrate site.

It belongs to the chalcone isomerase family.

The enzyme catalyses a chalcone = a flavanone.. It functions in the pathway secondary metabolite biosynthesis; flavonoid biosynthesis. Its function is as follows. Catalyzes the intramolecular cyclization of bicyclic chalcones into tricyclic (S)-flavanones. Responsible for the isomerization of 4,2',4',6'-tetrahydroxychalcone (also termed chalcone) into naringenin. The chain is Chalcone--flavanone isomerase 3 (CHI3) from Glycine max (Soybean).